The sequence spans 923 residues: Neuropilin-1 (923 aa).

The N-terminal stretch at 1-21 (MERGLPLLCAVLALVLAPAGA) is a signal peptide. Residues 22 to 856 (FRNDKCGDTI…PGNVLKTLDP (835 aa)) lie on the Extracellular side of the membrane. Disulfide bonds link Cys27–Cys54, Cys82–Cys104, and Cys147–Cys173. 2 CUB domains span residues 27-141 (CGDT…YEIF) and 147-265 (CSQN…YSVL). Asn150 carries an N-linked (GlcNAc...) asparagine glycan. Glu195, Asp209, and Asp250 together coordinate Ca(2+). Residues Cys206 and Cys228 are joined by a disulfide bond. 3 N-linked (GlcNAc...) asparagine glycosylation sites follow: Asn261, Asn300, and Asn522. Cystine bridges form between Cys275-Cys424 and Cys431-Cys583. F5/8 type C domains follow at residues 275 to 424 (CMEA…VYGC) and 431 to 583 (CSGM…LLGC). Ser612 is a glycosylation site (O-linked (Xyl...) (chondroitin sulfate) serine; alternate). Ser612 carries an O-linked (Xyl...) (heparan sulfate) serine; alternate glycan. Positions 645-811 (TYGFNCEFGW…NHISQEDCAK (167 aa)) constitute an MAM domain. Residues 820-845 (PEIKIDETGSTPGYEGEGEGDKNISR) form a disordered region. O-linked (Xyl...) (chondroitin sulfate) serine glycosylation is present at Ser829. Asn842 is a glycosylation site (N-linked (GlcNAc...) asparagine). A helical transmembrane segment spans residues 857–879 (ILITIIAMSALGVLLGAVCGVVL). The Cytoplasmic segment spans residues 880-923 (YCACWHNGMSERNLSALENYNFELVDGVKLKKDKLNTQSTYSEA). Phosphoserine is present on Ser894.

Belongs to the neuropilin family. Homodimer, and heterodimer with NRP2. Interacts with FER. Interacts with PLXNB1. Interacts with VEGFA. Interacts with ABCB8/MITOSUR in mitochondria. As to quaternary structure, (Microbial infection) Interacts with SARS coronavirus-2/SARS-CoV-2 spike protein S1 (via the CendR motif RRAR). As to expression, the expression of isoforms 1 and 2 does not seem to overlap. Expressed in olfactory epithelium (at protein level). Expressed in fibroblasts (at protein level). Expressed by the blood vessels of different tissues. In the developing embryo it is found predominantly in the nervous system. In adult tissues, it is highly expressed in heart and placenta; moderately in lung, liver, skeletal muscle, kidney and pancreas; and low in adult brain. Expressed in the central nervous system, including olfactory related regions such as the olfactory tubercles and paraolfactory gyri. The expression of isoforms 1 and 2 does not seem to overlap. Found in liver hepatocytes, kidney distal and proximal tubules.

Its subcellular location is the secreted. The protein localises to the mitochondrion membrane. It localises to the cell membrane. The protein resides in the cytoplasm. Its function is as follows. Cell-surface receptor involved in the development of the cardiovascular system, in angiogenesis, in the formation of certain neuronal circuits and in organogenesis outside the nervous system. Mediates the chemorepulsant activity of semaphorins. Recognizes a C-end rule (CendR) motif R/KXXR/K on its ligands which causes cellular internalization and vascular leakage. It binds to semaphorin 3A, the PLGF-2 isoform of PGF, the VEGF165 isoform of VEGFA and VEGFB. Coexpression with KDR results in increased VEGF165 binding to KDR as well as increased chemotaxis. Regulates VEGF-induced angiogenesis. Binding to VEGFA initiates a signaling pathway needed for motor neuron axon guidance and cell body migration, including for the caudal migration of facial motor neurons from rhombomere 4 to rhombomere 6 during embryonic development. Regulates mitochondrial iron transport via interaction with ABCB8/MITOSUR. Functionally, (Microbial infection) Acts as a host factor for human coronavirus SARS-CoV-2 infection. Recognizes and binds to CendR motif RRAR on SARS-CoV-2 spike protein S1 which enhances SARS-CoV-2 infection. Binds VEGF-165 and may inhibit its binding to cells. May induce apoptosis by sequestering VEGF-165. May bind as well various members of the semaphorin family. Its expression has an averse effect on blood vessel number and integrity. The sequence is that of Neuropilin-1 from Homo sapiens (Human).